A 165-amino-acid polypeptide reads, in one-letter code: Large ribosomal subunit protein uL10 (165 aa).

It belongs to the universal ribosomal protein uL10 family. As to quaternary structure, part of the ribosomal stalk of the 50S ribosomal subunit. The N-terminus interacts with L11 and the large rRNA to form the base of the stalk. The C-terminus forms an elongated spine to which L12 dimers bind in a sequential fashion forming a multimeric L10(L12)X complex.

Forms part of the ribosomal stalk, playing a central role in the interaction of the ribosome with GTP-bound translation factors. This Mycoplasma mycoides subsp. mycoides SC (strain CCUG 32753 / NCTC 10114 / PG1) protein is Large ribosomal subunit protein uL10.